Reading from the N-terminus, the 137-residue chain is Ribosome-binding factor A (137 aa).

Belongs to the RbfA family. In terms of assembly, monomer. Binds 30S ribosomal subunits, but not 50S ribosomal subunits or 70S ribosomes.

Its subcellular location is the cytoplasm. Its function is as follows. One of several proteins that assist in the late maturation steps of the functional core of the 30S ribosomal subunit. Associates with free 30S ribosomal subunits (but not with 30S subunits that are part of 70S ribosomes or polysomes). Required for efficient processing of 16S rRNA. May interact with the 5'-terminal helix region of 16S rRNA. The polypeptide is Ribosome-binding factor A (Nitrobacter hamburgensis (strain DSM 10229 / NCIMB 13809 / X14)).